Here is a 383-residue protein sequence, read N- to C-terminus: 8-amino-7-oxononanoate synthase (383 aa).

Arginine 23 contributes to the substrate binding site. 110 to 111 is a pyridoxal 5'-phosphate binding site; sequence GF. Histidine 135 contacts substrate. Pyridoxal 5'-phosphate is bound by residues serine 181, histidine 209, and threonine 235. Residue lysine 238 is modified to N6-(pyridoxal phosphate)lysine. Residue threonine 351 participates in substrate binding.

The protein belongs to the class-II pyridoxal-phosphate-dependent aminotransferase family. BioF subfamily. As to quaternary structure, homodimer. Pyridoxal 5'-phosphate is required as a cofactor.

The enzyme catalyses 6-carboxyhexanoyl-[ACP] + L-alanine + H(+) = (8S)-8-amino-7-oxononanoate + holo-[ACP] + CO2. It functions in the pathway cofactor biosynthesis; biotin biosynthesis. Its function is as follows. Catalyzes the decarboxylative condensation of pimeloyl-[acyl-carrier protein] and L-alanine to produce 8-amino-7-oxononanoate (AON), [acyl-carrier protein], and carbon dioxide. This chain is 8-amino-7-oxononanoate synthase, found in Aliivibrio fischeri (strain MJ11) (Vibrio fischeri).